The chain runs to 186 residues: Large ribosomal subunit protein uL22 (186 aa).

Ser-158 carries the post-translational modification Phosphoserine. Residues Lys-159–Glu-186 are disordered. Residue Thr-161 is modified to Phosphothreonine. A compositionally biased stretch (basic and acidic residues) spans Arg-177–Glu-186.

This sequence belongs to the universal ribosomal protein uL22 family.

The protein is Large ribosomal subunit protein uL22 (RpL17) of Drosophila melanogaster (Fruit fly).